We begin with the raw amino-acid sequence, 220 residues long: Fructose-6-phosphate aldolase (220 aa).

The Schiff-base intermediate with substrate role is filled by lysine 85.

It belongs to the transaldolase family. Type 3A subfamily. As to quaternary structure, homodecamer.

The protein localises to the cytoplasm. It carries out the reaction beta-D-fructose 6-phosphate = dihydroxyacetone + D-glyceraldehyde 3-phosphate. Catalyzes the reversible formation of fructose 6-phosphate from dihydroxyacetone and D-glyceraldehyde 3-phosphate via an aldolization reaction. In Klebsiella pneumoniae subsp. pneumoniae (strain ATCC 700721 / MGH 78578), this protein is Fructose-6-phosphate aldolase.